A 485-amino-acid polypeptide reads, in one-letter code: MSLFDHKITELKQMIHKKEIKISDLVDESYKRIASVDDKVQAFLQLDEERARAYAKELDEAVDGRSEHGLLFGMPIGVKDNIVTKGLRTTCSSKILENFDPIYDATVVERLQAAEAVTIGKLNMDEFAMGSSTENSAYKATKNPWNLDTVPGGSSGGSAAAVAAGEVPFSLGSDTGGSIRQPASFCGVVGLKPTYGRVSRYGLVAFASSLDQIGPITRTVEDNAFLLQAISGPDKMDSTSANVEVPDFLSSLTGDIKGLKIAVPKEYLGEGVGKEAKESVLAALKVLEDLGATWEEVSLPHSKYALATYYLLSSSEASANLARFDGIRYGYRSDNADNLIDLYKQTRSEGFGNEVKRRIMLGTFALSSGYYDAYYKKAQKVRTLIKKDFEDVFEKYDVIVGPTTPTPAFKIGEKTSDPLTMYANDILTIPVNLAGVPGISVPCGFADGLPLGLQIIGKHFDEGTVYRVAHAFEQATDHHKAKPEL.

Active-site charge relay system residues include K79 and S154. S178 functions as the Acyl-ester intermediate in the catalytic mechanism.

This sequence belongs to the amidase family. GatA subfamily. As to quaternary structure, heterotrimer of A, B and C subunits.

It catalyses the reaction L-glutamyl-tRNA(Gln) + L-glutamine + ATP + H2O = L-glutaminyl-tRNA(Gln) + L-glutamate + ADP + phosphate + H(+). Allows the formation of correctly charged Gln-tRNA(Gln) through the transamidation of misacylated Glu-tRNA(Gln) in organisms which lack glutaminyl-tRNA synthetase. The reaction takes place in the presence of glutamine and ATP through an activated gamma-phospho-Glu-tRNA(Gln). The sequence is that of Glutamyl-tRNA(Gln) amidotransferase subunit A from Bacillus velezensis (strain DSM 23117 / BGSC 10A6 / LMG 26770 / FZB42) (Bacillus amyloliquefaciens subsp. plantarum).